The sequence spans 231 residues: Protein INCA1 (231 aa).

Positions 75 to 99 (SLHPLEGLPPPEKLWRRKRKKLHLE) are interaction with CCNA1 and CCNA1/CDK2 complex; essential for CDK2 inhibitory activity. The Nuclear localization signal motif lies at 90 to 95 (RRKRKK). T180 bears the Phosphothreonine mark.

It belongs to the INCA family. In terms of assembly, interacts with CCNA1. Identified in a complex with CCNA1 and CDK2. Interacts with ZNF16; the interaction inhibits INCA1 activity and induces the cell cycle process. Interacts with SPACA9. Interacts with CCNA2, CCNB1 and CCNE1. Interacts with the CCNA1/CDK2 complex. Interacts with ING5, DAZAP2, RNF26, USP15, SPOUT1, DPH7, TRIM26 and RAB5C. In terms of processing, phosphorylated when part of a complex with CCNA1 and CDK2.

The protein localises to the nucleus. It is found in the cytoplasm. Functionally, binds to CDK2-bound cyclins and inhibits the kinase activity of CDK2; binding to cyclins is critical for its function as CDK inhibitor. Inhibits cell growth and proliferation and may play a role in cell cycle control. Required for ING5-mediated regulation of S-phase progression, enhancement of Fas-induced apoptosis and inhibition of cell growth. This chain is Protein INCA1 (Inca1), found in Mus musculus (Mouse).